The following is a 171-amino-acid chain: Shikimate kinase (171 aa).

Residue 14–19 (GAGKST) coordinates ATP. Ser-18 is a Mg(2+) binding site. 3 residues coordinate substrate: Asp-36, Arg-60, and Gly-82. Position 120 (Arg-120) interacts with ATP. Arg-139 contributes to the substrate binding site. ATP is bound at residue Gln-156.

The protein belongs to the shikimate kinase family. As to quaternary structure, monomer. The cofactor is Mg(2+).

Its subcellular location is the cytoplasm. It carries out the reaction shikimate + ATP = 3-phosphoshikimate + ADP + H(+). It participates in metabolic intermediate biosynthesis; chorismate biosynthesis; chorismate from D-erythrose 4-phosphate and phosphoenolpyruvate: step 5/7. Catalyzes the specific phosphorylation of the 3-hydroxyl group of shikimic acid using ATP as a cosubstrate. The chain is Shikimate kinase from Shewanella oneidensis (strain ATCC 700550 / JCM 31522 / CIP 106686 / LMG 19005 / NCIMB 14063 / MR-1).